Consider the following 213-residue polypeptide: Protein GET1 (213 aa).

The Lumenal portion of the chain corresponds to 1–4 (MPSL). The helical transmembrane segment at 5 to 24 (LLVVFILQFLLHIINTVGAS) threads the bilayer. Residues 25–110 (TVNDLLWILY…AFTSAVSTLR (86 aa)) lie on the Cytoplasmic side of the membrane. The stretch at 41–68 (TSSSAQKAQKLKKEIVQLKRELGATSAQ) forms a coiled coil. A helical transmembrane segment spans residues 111–131 (WLGTQGLRFVLQFWFAKSPMF). The Lumenal portion of the chain corresponds to 132 to 155 (WMPAGWLPFYVEWILSFPRAPLGS). A helical transmembrane segment spans residues 156-172 (VSINVWGIACASMIALA). Residues 173–213 (AEGLAAVWVLATKRPTPIATEKKEAMAFAADQKSSGEKKEL) are Cytoplasmic-facing.

The protein belongs to the WRB/GET1 family. As to quaternary structure, interacts with GET3.

The protein localises to the endoplasmic reticulum membrane. In terms of biological role, required for the post-translational delivery of tail-anchored (TA) proteins to the endoplasmic reticulum. Acts as a membrane receptor for soluble GET3, which recognizes and selectively binds the transmembrane domain of TA proteins in the cytosol. The sequence is that of Protein GET1 from Phaeosphaeria nodorum (strain SN15 / ATCC MYA-4574 / FGSC 10173) (Glume blotch fungus).